A 311-amino-acid polypeptide reads, in one-letter code: Aspartate carbamoyltransferase catalytic subunit (311 aa).

Carbamoyl phosphate-binding residues include R58 and T59. Residue K86 participates in L-aspartate binding. Carbamoyl phosphate-binding residues include R108, H136, and Q139. R169 and R224 together coordinate L-aspartate. Carbamoyl phosphate is bound by residues G265 and P266.

Belongs to the aspartate/ornithine carbamoyltransferase superfamily. ATCase family. As to quaternary structure, heterododecamer (2C3:3R2) of six catalytic PyrB chains organized as two trimers (C3), and six regulatory PyrI chains organized as three dimers (R2).

The enzyme catalyses carbamoyl phosphate + L-aspartate = N-carbamoyl-L-aspartate + phosphate + H(+). Its pathway is pyrimidine metabolism; UMP biosynthesis via de novo pathway; (S)-dihydroorotate from bicarbonate: step 2/3. Its function is as follows. Catalyzes the condensation of carbamoyl phosphate and aspartate to form carbamoyl aspartate and inorganic phosphate, the committed step in the de novo pyrimidine nucleotide biosynthesis pathway. This chain is Aspartate carbamoyltransferase catalytic subunit, found in Geotalea daltonii (strain DSM 22248 / JCM 15807 / FRC-32) (Geobacter daltonii).